The chain runs to 832 residues: Beta-galactosidase (832 aa).

The N-terminal stretch at 1 to 25 is a signal peptide; it reads MALKLVLMLMVALLAAVWSPPAVTA. Catalysis depends on Glu-183, which acts as the Proton donor. Glu-252 acts as the Nucleophile in catalysis. Positions 741–832 constitute an SUEL-type lectin domain; that stretch reads AYGRPKVHLS…KKLAVEAICE (92 aa).

The protein belongs to the glycosyl hydrolase 35 family.

The protein resides in the secreted. It is found in the extracellular space. It localises to the apoplast. It catalyses the reaction Hydrolysis of terminal non-reducing beta-D-galactose residues in beta-D-galactosides.. The sequence is that of Beta-galactosidase from Asparagus officinalis (Garden asparagus).